The sequence spans 431 residues: CinA-like protein (431 aa).

It belongs to the CinA family.

The protein is CinA-like protein of Chlorobium luteolum (strain DSM 273 / BCRC 81028 / 2530) (Pelodictyon luteolum).